The chain runs to 441 residues: Vacuolar cation/proton exchanger 2 (441 aa).

The Cytoplasmic portion of the chain corresponds to M1–K69. A helical transmembrane segment spans residues I70–V90. Topologically, residues H91–K97 are extracellular. The chain crosses the membrane as a helical span at residues G98–A118. At T119–T129 the chain is on the cytoplasmic side. A helical membrane pass occupies residues V130–A150. Residues G139 to V174 form a cation selection region. The Extracellular portion of the chain corresponds to L151–S166. A helical transmembrane segment spans residues I167–Y187. Over Q188–G196 the chain is Cytoplasmic. The chain crosses the membrane as a helical span at residues I197–V217. Over L218–E231 the chain is Extracellular. Residues L232–F252 traverse the membrane as a helical segment. Over Q253–W286 the chain is Cytoplasmic. Residues E287 to V307 form a helical membrane-spanning segment. Over D308 to E311 the chain is Extracellular. The chain crosses the membrane as a helical span at residues G312–V332. Residues G333–L354 lie on the Cytoplasmic side of the membrane. The tract at residues G333–A368 is cation selection. A helical transmembrane segment spans residues G355–I375. Over G376–D384 the chain is Extracellular. Residues L385–F405 traverse the membrane as a helical segment. Topologically, residues L406–N412 are cytoplasmic. A helical transmembrane segment spans residues Y413 to H433. The Extracellular segment spans residues E434–I441.

Belongs to the Ca(2+):cation antiporter (CaCA) (TC 2.A.19) family. Cation/proton exchanger (CAX) subfamily.

It localises to the vacuole membrane. With respect to regulation, inhibited by excess of Ca(2+) and Cd(2+), Mn(2+), and Zn(2+). Vacuolar cation/proton exchanger (CAX). Translocates Ca(2+) and other metal ions into vacuoles using the proton gradient formed by H(+)-ATPase and H(+)-pyrophosphatase. The protein is Vacuolar cation/proton exchanger 2 (CAX2) of Arabidopsis thaliana (Mouse-ear cress).